The following is a 195-amino-acid chain: Holliday junction branch migration complex subunit RuvA (195 aa).

Residues 1 to 62 (MIEFVKGPVA…EDQQTLYGFR (62 aa)) are domain I. The tract at residues 63–141 (SRRERELFNK…ELAPDYVPNE (79 aa)) is domain II. A flexible linker region spans residues 141 to 145 (EGLFA). The segment at 146-195 (QGASELDEACEALVALGYSEREIAKVRKALSGEILTTDAYIKRALQLLLK) is domain III.

This sequence belongs to the RuvA family. In terms of assembly, homotetramer. Forms an RuvA(8)-RuvB(12)-Holliday junction (HJ) complex. HJ DNA is sandwiched between 2 RuvA tetramers; dsDNA enters through RuvA and exits via RuvB. An RuvB hexamer assembles on each DNA strand where it exits the tetramer. Each RuvB hexamer is contacted by two RuvA subunits (via domain III) on 2 adjacent RuvB subunits; this complex drives branch migration. In the full resolvosome a probable DNA-RuvA(4)-RuvB(12)-RuvC(2) complex forms which resolves the HJ.

The protein localises to the cytoplasm. Functionally, the RuvA-RuvB-RuvC complex processes Holliday junction (HJ) DNA during genetic recombination and DNA repair, while the RuvA-RuvB complex plays an important role in the rescue of blocked DNA replication forks via replication fork reversal (RFR). RuvA specifically binds to HJ cruciform DNA, conferring on it an open structure. The RuvB hexamer acts as an ATP-dependent pump, pulling dsDNA into and through the RuvAB complex. HJ branch migration allows RuvC to scan DNA until it finds its consensus sequence, where it cleaves and resolves the cruciform DNA. The sequence is that of Holliday junction branch migration complex subunit RuvA from Exiguobacterium sp. (strain ATCC BAA-1283 / AT1b).